We begin with the raw amino-acid sequence, 359 residues long: 3-dehydroquinate synthase (359 aa).

Residues 70 to 75 (DGEQYK), 105 to 109 (GVIGD), 129 to 130 (TT), K142, K151, and 169 to 172 (FYKT) contribute to the NAD(+) site. 3 residues coordinate Zn(2+): E184, H247, and H264.

Belongs to the sugar phosphate cyclases superfamily. Dehydroquinate synthase family. It depends on Co(2+) as a cofactor. Requires Zn(2+) as cofactor. NAD(+) is required as a cofactor.

The protein localises to the cytoplasm. The enzyme catalyses 7-phospho-2-dehydro-3-deoxy-D-arabino-heptonate = 3-dehydroquinate + phosphate. Its pathway is metabolic intermediate biosynthesis; chorismate biosynthesis; chorismate from D-erythrose 4-phosphate and phosphoenolpyruvate: step 2/7. Its function is as follows. Catalyzes the conversion of 3-deoxy-D-arabino-heptulosonate 7-phosphate (DAHP) to dehydroquinate (DHQ). The polypeptide is 3-dehydroquinate synthase (Francisella tularensis subsp. tularensis (strain WY96-3418)).